The sequence spans 1070 residues: DNA-directed RNA polymerase subunit beta (1070 aa).

The protein belongs to the RNA polymerase beta chain family. As to quaternary structure, in plastids the minimal PEP RNA polymerase catalytic core is composed of four subunits: alpha, beta, beta', and beta''. When a (nuclear-encoded) sigma factor is associated with the core the holoenzyme is formed, which can initiate transcription.

It is found in the plastid. It localises to the chloroplast. It carries out the reaction RNA(n) + a ribonucleoside 5'-triphosphate = RNA(n+1) + diphosphate. In terms of biological role, DNA-dependent RNA polymerase catalyzes the transcription of DNA into RNA using the four ribonucleoside triphosphates as substrates. The polypeptide is DNA-directed RNA polymerase subunit beta (Phalaenopsis aphrodite subsp. formosana (Moth orchid)).